A 245-amino-acid chain; its full sequence is Dehydrogenase/reductase SDR family member 6 (245 aa).

NAD(+)-binding positions include 16–18, aspartate 37, and aspartate 58; that span reads QGI. Substrate is bound at residue arginine 144. Tyrosine 147 functions as the Proton acceptor in the catalytic mechanism. NAD(+)-binding positions include lysine 151 and 180–184; that span reads VDTPS. 2 residues coordinate substrate: arginine 188 and arginine 205.

Belongs to the short-chain dehydrogenases/reductases (SDR) family. In terms of assembly, homotetramer.

It localises to the cytoplasm. It carries out the reaction cis-4-hydroxy-L-proline + NAD(+) = 4-oxo-L-proline + NADH + H(+). The enzyme catalyses (R)-3-hydroxybutanoate + NAD(+) = acetoacetate + NADH + H(+). The protein operates within amino-acid metabolism. Its pathway is siderophore biosynthesis. Functionally, NAD(H)-dependent dehydrogenase/reductase with a preference for cyclic substrates. Catalyzes stereoselective conversion of 4-oxo-L-proline to cis-4-hydroxy-L-proline, likely a detoxification mechanism for ketoprolines. Mediates the formation of 2,5-dihydroxybenzoate (2,5-DHBA), a siderophore that chelates free cytoplasmic iron, thereby regulating iron transport and homeostasis while protecting cells against free radical-induced oxidative stress. The iron-siderophore complex is imported into mitochondria, providing an iron source for mitochondrial metabolic processes in particular heme synthesis. May act as a 3-hydroxybutyrate dehydrogenase. The protein is Dehydrogenase/reductase SDR family member 6 (bdh2) of Xenopus laevis (African clawed frog).